We begin with the raw amino-acid sequence, 362 residues long: 3-dehydroquinate synthase (362 aa).

NAD(+) is bound by residues 71 to 76, 105 to 109, 129 to 130, lysine 142, lysine 151, and 169 to 172; these read DGEQYK, GVVGD, TT, and CLKT. Glutamate 184, histidine 247, and histidine 264 together coordinate Zn(2+).

This sequence belongs to the sugar phosphate cyclases superfamily. Dehydroquinate synthase family. It depends on Co(2+) as a cofactor. Zn(2+) is required as a cofactor. The cofactor is NAD(+).

The protein resides in the cytoplasm. The catalysed reaction is 7-phospho-2-dehydro-3-deoxy-D-arabino-heptonate = 3-dehydroquinate + phosphate. The protein operates within metabolic intermediate biosynthesis; chorismate biosynthesis; chorismate from D-erythrose 4-phosphate and phosphoenolpyruvate: step 2/7. Catalyzes the conversion of 3-deoxy-D-arabino-heptulosonate 7-phosphate (DAHP) to dehydroquinate (DHQ). The sequence is that of 3-dehydroquinate synthase from Escherichia coli O81 (strain ED1a).